The chain runs to 143 residues: MRHSKSGRKLNRTASHRKAMFANMAISLIEHEQIVTTLPKAKEIRPIVEKLVTLGKRGGLHARRQAIAALRDAGKVAKLFDTLAPRYASRNGGYLRIMKAGFRTGDNAPMAVIEFVDRDVDAKGAVDRARAESAANEKEASSL.

The protein belongs to the bacterial ribosomal protein bL17 family. Part of the 50S ribosomal subunit. Contacts protein L32.

This chain is Large ribosomal subunit protein bL17, found in Bartonella quintana (strain Toulouse) (Rochalimaea quintana).